We begin with the raw amino-acid sequence, 589 residues long: Guanylate-binding protein 1 (589 aa).

Positions 1–309 (MASEIHMSEP…SAICSGELPC (309 aa)) are GTPase domain (Globular). The GB1/RHD3-type G domain maps to 35–276 (TQPVVVVAIV…FTSYIFSYSG (242 aa)). Residues 47–53 (YRTGKSY), 67–69 (LGS), and 97–101 (DTEGL) contribute to the GTP site. Phosphoserine is present on Ser156. Position 586 is a cysteine methyl ester (Cys586). Cys586 carries the S-farnesyl cysteine lipid modification. Cys586 carries S-geranylgeranyl cysteine; partial lipidation. Position 587 is a phosphothreonine (Thr587). A propeptide spans 587 to 589 (TIL) (removed in mature form).

It belongs to the TRAFAC class dynamin-like GTPase superfamily. GB1/RHD3 GTPase family. GB1 subfamily. In terms of assembly, homodimer; homodimerization occurs upon GTP-binding and is required for the second hydrolysis step from GDP to GMP. Undergoes conformational changes and oligomerization upon GTP-binding and hydrolysis. Heterodimer with other family members, including GBP2, GBP3, GBP4 and GBP5. Dimerization regulates subcellular location to membranous structures. Interacts with SQSTM1. Interacts (when phosphorylated) with 14-3-3 protein sigma (SFN); leading to GBP1 retention in the cytosol and inactivation. Post-translationally, isoprenylation of mouse GBP1 is incomplete. It persistently exists in the cell as a mixture of C20-modified and (more predominantly) unmodified form. Isoprenylation is required for proper subcellular location. In terms of processing, phosphorylated at Ser-156 by PIM1 in absence of infection, inhibits GBP1: phosphorylation promotes interaction with 14-3-3 protein sigma (SFN), leading to GBP1 retention in the cytosol. Dephosphorylated in response to infection, liberating GBP1.

Its subcellular location is the cytoplasmic vesicle membrane. It localises to the golgi apparatus membrane. The protein resides in the cell membrane. It is found in the cytoplasm. The protein localises to the cytosol. Its subcellular location is the secreted. It carries out the reaction GTP + H2O = GDP + phosphate + H(+). The catalysed reaction is GDP + H2O = GMP + phosphate + H(+). Functionally, interferon (IFN)-inducible GTPase that plays important roles in innate immunity against a diverse range of bacterial, viral and protozoan pathogens. Hydrolyzes GTP to GMP in two consecutive cleavage reactions: GTP is first hydrolyzed to GDP and then to GMP in a processive manner. Following infection, recruited to the pathogen-containing vacuoles or vacuole-escaped bacteria and promotes both inflammasome assembly and autophagy. Acts as a positive regulator of inflammasome assembly by facilitating the detection of inflammasome ligands from pathogens. Involved in the lysis of pathogen-containing vacuoles, releasing pathogens into the cytosol. Following pathogen release in the cytosol, forms a protein coat in a GTPase-dependent manner that encapsulates pathogens and promotes the detection of ligands by pattern recognition receptors. Plays a key role in inflammasome assembly in response to infection by Gram-negative bacteria: following pathogen release in the cytosol, forms a protein coat that encapsulates Gram-negative bacteria and directly binds to lipopolysaccharide (LPS), disrupting the O-antigen barrier and unmasking lipid A that is that detected by the non-canonical inflammasome effector CASP4/CASP11. Also promotes recruitment of proteins that mediate bacterial cytolysis, leading to release double-stranded DNA (dsDNA) that activates the AIM2 inflammasome. Involved in autophagy by regulating bacteriolytic peptide generation via its interaction with ubiquitin-binding protein SQSTM1, which delivers monoubiquitinated proteins to autolysosomes for the generation of bacteriolytic peptides. Confers protection to several pathogens, including the bacterial pathogens L.monocytogenes and M.bovis BCG as well as the protozoan pathogen T.gondii. Exhibits antiviral activity against influenza virus. In Mus musculus (Mouse), this protein is Guanylate-binding protein 1 (Gbp1).